Here is a 172-residue protein sequence, read N- to C-terminus: Putative RNA polymerase II transcriptional coactivator (172 aa).

Disordered stretches follow at residues 1-43 and 123-172; these read MPPK…QDGN and QTDA…DDDE. The segment covering 24 to 43 has biased composition (polar residues); sequence GNTGKAQPQELTKGSDQDGN. Positions 131–144 are enriched in basic and acidic residues; that stretch reads PKVKALESNKESIK. Residues 158 to 172 are compositionally biased toward acidic residues; that stretch reads TSDEEEAAEDEDDDE.

It belongs to the transcriptional coactivator PC4 family.

The protein localises to the nucleus. General coactivator that functions cooperatively with TAFs and mediates functional interactions between upstream activators and the general transcriptional machinery. Binds single-stranded DNA. This chain is Putative RNA polymerase II transcriptional coactivator, found in Neurospora crassa (strain ATCC 24698 / 74-OR23-1A / CBS 708.71 / DSM 1257 / FGSC 987).